Consider the following 302-residue polypeptide: Uricase (302 aa).

Ser-2 is modified (N-acetylserine). Residues Lys-11 and Thr-58 each act as charge relay system in the active site. 5-hydroxyisourate contacts are provided by Thr-58, Asp-59, Phe-160, Arg-177, Val-228, Gln-229, and Asn-255. Residue Thr-58 participates in O2 binding. Residues Thr-58, Asp-59, Phe-160, Arg-177, Val-228, Gln-229, and Asn-255 each contribute to the urate site. Asn-255 contacts O2. The active-site Charge relay system is the His-257. A Microbody targeting signal motif is present at residues Ser-300–Leu-302.

This sequence belongs to the uricase family. As to quaternary structure, homotetramer.

Its subcellular location is the peroxisome. It carries out the reaction urate + O2 + H2O = 5-hydroxyisourate + H2O2. Its pathway is purine metabolism; urate degradation; (S)-allantoin from urate: step 1/3. With respect to regulation, 8-Azaxanthine is one of the most potent competitive inhibitors of uricase activity. Hypoxanthine has only a small inhibitor effect, and caffeine has no effect at all. Azide not only competes with dioxygen but also competes with the substrate for its enzymatic site. Functionally, urate oxidase is a cofactorless enzyme involved in the metabolism of purines. Catalyzes, in the presence of molecular oxygen, the hydroxylation of uric acid to metastable 5-hydroxyisourate (5-HIU) which is further degraded to allantoin. This is Uricase from Aspergillus flavus.